The chain runs to 352 residues: Photosystem II D2 protein (352 aa).

The chain crosses the membrane as a helical span at residues 40-60; that stretch reads CAFLSIGGWLTGTTFVTSWYT. Position 117 (histidine 117) interacts with chlorophyll a. A helical transmembrane segment spans residues 124 to 140; the sequence is GFCLRQIEIARLVGIRP. Residues glutamine 129 and asparagine 142 each coordinate pheophytin a. Residues 152-165 traverse the membrane as a helical segment; that stretch reads VFVSVFLMYPLGQS. Histidine 197 serves as a coordination point for chlorophyll a. A helical transmembrane segment spans residues 207–227; that stretch reads GALLCAIHGATVENTLFQDGE. Residues histidine 214 and phenylalanine 261 each coordinate a plastoquinone. Histidine 214 is a binding site for Fe cation. Histidine 268 is a Fe cation binding site. A helical membrane pass occupies residues 278–294; that stretch reads GLWMSSIGIVGLAFNLR.

This sequence belongs to the reaction center PufL/M/PsbA/D family. In terms of assembly, PSII is composed of 1 copy each of membrane proteins PsbA, PsbB, PsbC, PsbD, PsbE, PsbF, PsbH, PsbI, PsbJ, PsbK, PsbL, PsbM, PsbT, PsbX, PsbY, PsbZ, Psb30/Ycf12, peripheral proteins PsbO, CyanoQ (PsbQ), PsbU, PsbV and a large number of cofactors. It forms dimeric complexes. The D1/D2 heterodimer binds P680, chlorophylls that are the primary electron donor of PSII, and subsequent electron acceptors. It shares a non-heme iron and each subunit binds pheophytin, quinone, additional chlorophylls, carotenoids and lipids. There is also a Cl(-1) ion associated with D1 and D2, which is required for oxygen evolution. The PSII complex binds additional chlorophylls, carotenoids and specific lipids. serves as cofactor.

Its subcellular location is the cellular thylakoid membrane. The catalysed reaction is 2 a plastoquinone + 4 hnu + 2 H2O = 2 a plastoquinol + O2. Photosystem II (PSII) is a light-driven water:plastoquinone oxidoreductase that uses light energy to abstract electrons from H(2)O, generating O(2) and a proton gradient subsequently used for ATP formation. It consists of a core antenna complex that captures photons, and an electron transfer chain that converts photonic excitation into a charge separation. The D1/D2 (PsbA/PsbD) reaction center heterodimer binds P680, the primary electron donor of PSII as well as several subsequent electron acceptors. D2 is needed for assembly of a stable PSII complex. This Trichodesmium erythraeum (strain IMS101) protein is Photosystem II D2 protein.